The sequence spans 521 residues: 3,4-dihydroxyphenylacetaldehyde synthase (521 aa).

Position 306 is an N6-(pyridoxal phosphate)lysine (K306).

The protein belongs to the group II decarboxylase family. It depends on pyridoxal 5'-phosphate as a cofactor. As to expression, highly expressed in the cuticle and midgut. Low expression in the head and thorax.

It catalyses the reaction L-dopa + O2 + H2O + H(+) = 3,4-dihydroxyphenylacetaldehyde + H2O2 + NH4(+) + CO2. Catalyzes the decarboxylation-oxidative deamination of L-3,4-dihydroxyphenylalanine (L-DOPA) to 3,4-dihydroxylphenylacetaldehyde (DHPAA). Involved in cuticle development. Probably responsible for the protein cross-linking during the development of flexible cuticles. In Aedes aegypti (Yellowfever mosquito), this protein is 3,4-dihydroxyphenylacetaldehyde synthase.